The following is a 328-amino-acid chain: 2-hydroxyisoflavanone dehydratase (328 aa).

An Involved in the stabilization of the negatively charged intermediate by the formation of the oxyanion hole motif is present at residues 85–87 (HGG). Residues Thr-173, Asp-272, and His-304 contribute to the active site.

Belongs to the 'GDXG' lipolytic enzyme family.

It catalyses the reaction (2R,3S)-2,4',7-trihydroxyisoflavanone = daidzein + H2O + H(+). It carries out the reaction 2-hydroxy-2,3-dihydrogenistein = genistein + H2O + H(+). The catalysed reaction is a carboxylic ester + H2O = an alcohol + a carboxylate + H(+). It participates in secondary metabolite biosynthesis; flavonoid biosynthesis. Its function is as follows. Dehydratase that mediates the biosynthesis of isoflavonoids. Can better use 2,7-dihydroxy-4'-methoxyisoflavanone as substrate. Has also a slight carboxylesterase activity toward p-nitrophenyl butyrate. This Glycyrrhiza echinata (Licorice) protein is 2-hydroxyisoflavanone dehydratase (HIDM).